A 403-amino-acid chain; its full sequence is uncharacterized protein (403 aa).

12 consecutive transmembrane segments (helical) span residues 25–47, 62–81, 88–110, 114–136, 143–165, 175–197, 229–251, 256–278, 290–307, 311–330, 350–372, and 376–398; these read IAFF…ILFL, SLSA…GPLS, VVMS…MNSW, IFMR…TYLS, VLSF…GRFL, WNIA…VYLL, LFFM…GYRL, FFLG…YSSP, GVIL…VLIT, IVLL…FAAH, SIYL…IFWI, and WLGI…IRLL.

It belongs to the major facilitator superfamily.

The protein resides in the cell membrane. This is an uncharacterized protein from Buchnera aphidicola subsp. Baizongia pistaciae (strain Bp).